The chain runs to 39 residues: Photosystem II reaction center protein L (39 aa).

The chain crosses the membrane as a helical span at residues serine 18–phenylalanine 38.

This sequence belongs to the PsbL family. As to quaternary structure, PSII is composed of 1 copy each of membrane proteins PsbA, PsbB, PsbC, PsbD, PsbE, PsbF, PsbH, PsbI, PsbJ, PsbK, PsbL, PsbM, PsbT, PsbX, PsbY, PsbZ, Psb30/Ycf12, at least 3 peripheral proteins of the oxygen-evolving complex and a large number of cofactors. It forms dimeric complexes.

The protein localises to the plastid. It is found in the organellar chromatophore thylakoid membrane. One of the components of the core complex of photosystem II (PSII). PSII is a light-driven water:plastoquinone oxidoreductase that uses light energy to abstract electrons from H(2)O, generating O(2) and a proton gradient subsequently used for ATP formation. It consists of a core antenna complex that captures photons, and an electron transfer chain that converts photonic excitation into a charge separation. This subunit is found at the monomer-monomer interface and is required for correct PSII assembly and/or dimerization. The polypeptide is Photosystem II reaction center protein L (Paulinella chromatophora).